The chain runs to 89 residues: Acylphosphatase (89 aa).

Residues 3 to 89 enclose the Acylphosphatase-like domain; the sequence is ALEIYVSGNV…ENYESFEVAY (87 aa). Active-site residues include Arg-18 and Asn-36.

It belongs to the acylphosphatase family.

The enzyme catalyses an acyl phosphate + H2O = a carboxylate + phosphate + H(+). This chain is Acylphosphatase (acyP), found in Archaeoglobus fulgidus (strain ATCC 49558 / DSM 4304 / JCM 9628 / NBRC 100126 / VC-16).